The chain runs to 247 residues: Osmotin-like protein OSML81 (247 aa).

The first 21 residues, 1–21, serve as a signal peptide directing secretion; it reads MGYLRSSFIFSLLAFVTYTYA. Intrachain disulfides connect C30/C225, C72/C82, C87/C93, C141/C213, C146/C196, C154/C164, C168/C177, and C178/C183.

Belongs to the thaumatin family.

The sequence is that of Osmotin-like protein OSML81 from Solanum commersonii (Commerson's wild potato).